The primary structure comprises 326 residues: Olfactory receptor 11H2 (326 aa).

The Extracellular portion of the chain corresponds to 1 to 44; the sequence is MCPLTLHVTGLMNVSEPNSSFAFVNEFILQGFSCEWTIQIFLFS. 2 N-linked (GlcNAc...) asparagine glycosylation sites follow: Asn13 and Asn18. Residues 45–65 traverse the membrane as a helical segment; the sequence is LFTTIYALTITGNGAIAFVLW. The Cytoplasmic portion of the chain corresponds to 66–72; it reads CDRRLHT. Residues 73–93 traverse the membrane as a helical segment; the sequence is PMYMFLGNFSFLEIWYVSSTV. Over 94-112 the chain is Extracellular; the sequence is PKMLVNFLSEKKNISFAGC. A glycan (N-linked (GlcNAc...) asparagine) is linked at Asn106. A disulfide bridge connects residues Cys112 and Cys194. The helical transmembrane segment at 113 to 133 threads the bilayer; the sequence is FLQFYFFFSLGTSECLLLTVM. At 134 to 158 the chain is on the cytoplasmic side; it reads AFDQYLAICRPLLYPNIMTGHLYAK. Residues 159 to 179 form a helical membrane-spanning segment; it reads LVILCWVCGFLWFLIPIVLIS. Residues 180-216 lie on the Extracellular side of the membrane; it reads QKPFCGPNIIDHVVCDPGPLFALDCVSAPRIQLFCYT. A helical membrane pass occupies residues 217–237; that stretch reads LSSLVIFGNFLFIIGSYTLVL. Over 238-259 the chain is Cytoplasmic; the sequence is KAVLGMPSSTGRHKAFSTCGSH. A helical transmembrane segment spans residues 260-280; that stretch reads LAVVSLCYSPLMVMYVSPGLG. Residues 281–287 are Extracellular-facing; the sequence is HSTGMQK. The helical transmembrane segment at 288 to 308 threads the bilayer; it reads IETLFYAMVTPLFNPLIYSLQ. The Cytoplasmic segment spans residues 309 to 326; that stretch reads NKEIKAALRKVLGSSNII.

The protein belongs to the G-protein coupled receptor 1 family.

The protein localises to the cell membrane. Functionally, odorant receptor. This Homo sapiens (Human) protein is Olfactory receptor 11H2 (OR11H2).